The sequence spans 747 residues: MQGVLRKTLVVAGRDLTLETGRLAKQAGGAVMVSYGGTMVLVTATASEEPREGIDFFPLTVDYEERLYAAGKIPGGFIKREGRPSEKAILSARLIDRPIRPLFPKFYRNDVHVVATVMSVDQDCPPNVAGIIGASAALMLSAIPFAGPIGAVSVGLIDNRPVINPTLEEDSRSSLNLTVAGTANAIMMVEAGAKEVPEDLMLECIMQGHEEIKRIVAFINEFRAEALAMGLAKEKPELVAPQLDPAWESRVREIATPRLREVIYRSRDEKWSKQERDKQLDACREEINNLILEGQEEALAANPELPGLIKELITKIEKEIVRRMILTEGIRVDGRTLEEIRPITCEVGVLSRTHGSGLFTRGETQVLTVTTLGPISDEQILDDLGVDESKRYMHHYNFPPYSVGEARPIRAPGRREIGHGALAERALEPMIPSEEEFPYAIRLVSEVLGSNGSTSMGSVCGSTLSLMDAGVPIKAPVAGVAMGLVKENDQVAILTDIQGLEDALGDMDFKVAGTKKGITALQMDIKIAGIDRSILERALEQARRGRLFILDKILATIPEPRKELSPYAPRMLTITIDPDKIRDIIGPGGKIIKKIIEETGVEIDVEDDGRVFIASTDAAAGERALKIIESLTQDVETGKVYNGKVTRVTDFGAFVEVIPRVLGMPGKEGLVHISQLANERVEKVEDVVQEGDYILVKAIGFDPQGRLKLSRKEALNESTVGEGGHRHFRRAGREGGHRGLNNRRQSR.

Residues Asp502 and Asp508 each contribute to the Mg(2+) site. Residues 569-628 enclose the KH domain; sequence PRMLTITIDPDKIRDIIGPGGKIIKKIIEETGVEIDVEDDGRVFIASTDAAAGERALKII. In terms of domain architecture, S1 motif spans 638 to 712; that stretch reads GKVYNGKVTR…PQGRLKLSRK (75 aa). A disordered region spans residues 718-747; sequence STVGEGGHRHFRRAGREGGHRGLNNRRQSR.

It belongs to the polyribonucleotide nucleotidyltransferase family. Requires Mg(2+) as cofactor.

The protein resides in the cytoplasm. The catalysed reaction is RNA(n+1) + phosphate = RNA(n) + a ribonucleoside 5'-diphosphate. Involved in mRNA degradation. Catalyzes the phosphorolysis of single-stranded polyribonucleotides processively in the 3'- to 5'-direction. This chain is Polyribonucleotide nucleotidyltransferase, found in Moorella thermoacetica (strain ATCC 39073 / JCM 9320).